A 59-amino-acid polypeptide reads, in one-letter code: Preprotein translocase subunit SecG (59 aa).

Residues M1–K35 are Cytoplasmic-facing. A helical transmembrane segment spans residues V36 to P56. Residues P57–L59 are Extracellular-facing.

Belongs to the SEC61-beta family. As to quaternary structure, component of the protein translocase complex. Heterotrimer consisting of alpha (SecY), beta (SecG) and gamma (SecE) subunits. Can form oligomers of the heterotrimer.

The protein localises to the cell membrane. Involved in protein export. The function of the beta subunit is unknown, but it may be involved in stabilization of the trimeric complex. The polypeptide is Preprotein translocase subunit SecG (Sulfolobus acidocaldarius (strain ATCC 33909 / DSM 639 / JCM 8929 / NBRC 15157 / NCIMB 11770)).